Reading from the N-terminus, the 201-residue chain is Translation initiation factor IF-3 (201 aa).

The interval 170 to 201 (TPKSASKKGHTPPKTQVEASKQANESAETEEE) is disordered. Polar residues predominate over residues 182–195 (PKTQVEASKQANES).

The protein belongs to the IF-3 family. In terms of assembly, monomer.

It localises to the cytoplasm. Its function is as follows. IF-3 binds to the 30S ribosomal subunit and shifts the equilibrium between 70S ribosomes and their 50S and 30S subunits in favor of the free subunits, thus enhancing the availability of 30S subunits on which protein synthesis initiation begins. The sequence is that of Translation initiation factor IF-3 from Porphyromonas gingivalis (strain ATCC BAA-308 / W83).